The primary structure comprises 635 residues: Cationic amino acid transporter 4 (635 aa).

3 helical membrane-spanning segments follow: residues 42–62 (LTLL…TGTV), 66–86 (MAGP…LLAA), and 113–133 (IWAF…GAAV). N-linked (GlcNAc...) asparagine glycans are attached at residues asparagine 146, asparagine 151, and asparagine 195. The helical transmembrane segment at 197-217 (TFSAISLIVILFIIVLGFILA) threads the bilayer. Asparagine 221 carries an N-linked (GlcNAc...) asparagine glycan. Helical transmembrane passes span 229 to 249 (FAPF…YAFV), 270 to 290 (MAIA…STVL), 318 to 338 (GFIV…SNLF), 365 to 385 (QVPV…ALLL), and 391 to 411 (VQFL…SIIV). Phosphoserine is present on residues serine 422 and serine 427. A run of 4 helical transmembrane segments spans residues 478–498 (VAWA…VLVF), 508–528 (WGYV…LLVL), 539–559 (TFQI…NTCL), and 567–587 (TWLR…GYGI).

Belongs to the amino acid-polyamine-organocation (APC) superfamily. Cationic amino acid transporter (CAT) (TC 2.A.3.3) family.

The protein resides in the membrane. Involved in the transport of the cationic amino acids (arginine, lysine and ornithine). In Mus musculus (Mouse), this protein is Cationic amino acid transporter 4 (Slc7a4).